A 369-amino-acid polypeptide reads, in one-letter code: DNA replication and repair protein RecF (369 aa).

30-37 (GQNAQGKT) provides a ligand contact to ATP.

It belongs to the RecF family.

It localises to the cytoplasm. Its function is as follows. The RecF protein is involved in DNA metabolism; it is required for DNA replication and normal SOS inducibility. RecF binds preferentially to single-stranded, linear DNA. It also seems to bind ATP. The protein is DNA replication and repair protein RecF of Acetivibrio thermocellus (strain ATCC 27405 / DSM 1237 / JCM 9322 / NBRC 103400 / NCIMB 10682 / NRRL B-4536 / VPI 7372) (Clostridium thermocellum).